A 167-amino-acid polypeptide reads, in one-letter code: MPTRSLPTFLTLLLLASIDWVSKLVVLLKSCQLSPHSSAFLYSYVWGHFSFLIIPSFNEGAAFGLFAQYKIPLLIFRVCVILGLALFLRIKYKSLHRRTRIALTLILAGALGNVGDILLHGKVVDFLFLSYYSWRFPSFNLADAFISIGTLLLIGHLYFTKESKKCF.

A run of 4 helical transmembrane segments spans residues 8–28 (TFLT…VVLL), 46–66 (WGHF…FGLF), 68–88 (QYKI…ALFL), and 101–121 (IALT…LLHG). Residues Asp-125 and Asp-143 contribute to the active site. A helical transmembrane segment spans residues 139-159 (FNLADAFISIGTLLLIGHLYF).

Belongs to the peptidase A8 family.

The protein localises to the cell inner membrane. It catalyses the reaction Release of signal peptides from bacterial membrane prolipoproteins. Hydrolyzes -Xaa-Yaa-Zaa-|-(S,diacylglyceryl)Cys-, in which Xaa is hydrophobic (preferably Leu), and Yaa (Ala or Ser) and Zaa (Gly or Ala) have small, neutral side chains.. The protein operates within protein modification; lipoprotein biosynthesis (signal peptide cleavage). Its function is as follows. This protein specifically catalyzes the removal of signal peptides from prolipoproteins. This Chlamydia trachomatis serovar L2 (strain ATCC VR-902B / DSM 19102 / 434/Bu) protein is Lipoprotein signal peptidase.